The following is a 105-amino-acid chain: Pyrimidine/purine nucleoside phosphorylase (105 aa).

This sequence belongs to the nucleoside phosphorylase PpnP family.

The catalysed reaction is a purine D-ribonucleoside + phosphate = a purine nucleobase + alpha-D-ribose 1-phosphate. It catalyses the reaction adenosine + phosphate = alpha-D-ribose 1-phosphate + adenine. The enzyme catalyses cytidine + phosphate = cytosine + alpha-D-ribose 1-phosphate. It carries out the reaction guanosine + phosphate = alpha-D-ribose 1-phosphate + guanine. The catalysed reaction is inosine + phosphate = alpha-D-ribose 1-phosphate + hypoxanthine. It catalyses the reaction thymidine + phosphate = 2-deoxy-alpha-D-ribose 1-phosphate + thymine. The enzyme catalyses uridine + phosphate = alpha-D-ribose 1-phosphate + uracil. It carries out the reaction xanthosine + phosphate = alpha-D-ribose 1-phosphate + xanthine. Functionally, catalyzes the phosphorolysis of diverse nucleosides, yielding D-ribose 1-phosphate and the respective free bases. Can use uridine, adenosine, guanosine, cytidine, thymidine, inosine and xanthosine as substrates. Also catalyzes the reverse reactions. The protein is Pyrimidine/purine nucleoside phosphorylase of Ralstonia nicotianae (strain ATCC BAA-1114 / GMI1000) (Ralstonia solanacearum).